Reading from the N-terminus, the 84-residue chain is Small ribosomal subunit protein eS27z (84 aa).

The C4-type zinc-finger motif lies at 39–61; the sequence is CQGCFNITTVFSHSQTVVMCGNC.

Belongs to the eukaryotic ribosomal protein eS27 family. In terms of assembly, (Microbial infection) May interact with Tomato yellow leaf curl virus (TYLCV) and papaya leaf curl China virus (PaLcuCNV) C2 proteins. This interaction prevents activation of Jasmonate signaling, thereby facilitating viral uptake by insects vectors. Requires Zn(2+) as cofactor.

This Arabidopsis thaliana (Mouse-ear cress) protein is Small ribosomal subunit protein eS27z (RPS27A).